The sequence spans 184 residues: Large ribosomal subunit protein uL5c (184 aa).

This sequence belongs to the universal ribosomal protein uL5 family. Part of the 50S ribosomal subunit; contacts the 5S rRNA.

The protein resides in the plastid. The protein localises to the chloroplast. Binds 5S rRNA, forms part of the central protuberance of the 50S subunit. The protein is Large ribosomal subunit protein uL5c (rpl5) of Ostreococcus tauri.